The sequence spans 124 residues: Putative iron-sulfur cluster insertion protein ErpA 2 (124 aa).

Positions 52, 116, and 118 each coordinate iron-sulfur cluster.

It belongs to the HesB/IscA family. In terms of assembly, homodimer. It depends on iron-sulfur cluster as a cofactor.

Functionally, required for insertion of 4Fe-4S clusters. The chain is Putative iron-sulfur cluster insertion protein ErpA 2 from Burkholderia vietnamiensis (strain G4 / LMG 22486) (Burkholderia cepacia (strain R1808)).